The following is a 105-amino-acid chain: Replication restart protein PriB (105 aa).

Residues 1 to 102 form the SSB domain; it reads MTANRLVLTG…LHAEQIELID (102 aa).

Belongs to the PriB family. As to quaternary structure, homodimer. Interacts with PriA and DnaT. Component of the replication restart primosome. Primosome assembly occurs via a 'hand-off' mechanism. PriA binds to replication forks, subsequently PriB then DnaT bind; DnaT then displaces ssDNA to generate the helicase loading substrate.

Its function is as follows. Involved in the restart of stalled replication forks, which reloads the replicative helicase on sites other than the origin of replication; the PriA-PriB pathway is the major replication restart pathway. During primosome assembly it facilitates complex formation between PriA and DnaT on DNA; stabilizes PriA on DNA. Stimulates the DNA unwinding activity of PriA helicase. The sequence is that of Replication restart protein PriB from Proteus mirabilis (strain HI4320).